The primary structure comprises 575 residues: 2-succinyl-5-enolpyruvyl-6-hydroxy-3-cyclohexene-1-carboxylate synthase (575 aa).

This sequence belongs to the TPP enzyme family. MenD subfamily. In terms of assembly, homodimer. Mg(2+) is required as a cofactor. Requires Mn(2+) as cofactor. Thiamine diphosphate serves as cofactor.

The catalysed reaction is isochorismate + 2-oxoglutarate + H(+) = 5-enolpyruvoyl-6-hydroxy-2-succinyl-cyclohex-3-ene-1-carboxylate + CO2. It functions in the pathway quinol/quinone metabolism; 1,4-dihydroxy-2-naphthoate biosynthesis; 1,4-dihydroxy-2-naphthoate from chorismate: step 2/7. The protein operates within quinol/quinone metabolism; menaquinone biosynthesis. Functionally, catalyzes the thiamine diphosphate-dependent decarboxylation of 2-oxoglutarate and the subsequent addition of the resulting succinic semialdehyde-thiamine pyrophosphate anion to isochorismate to yield 2-succinyl-5-enolpyruvyl-6-hydroxy-3-cyclohexene-1-carboxylate (SEPHCHC). The polypeptide is 2-succinyl-5-enolpyruvyl-6-hydroxy-3-cyclohexene-1-carboxylate synthase (Syntrophus aciditrophicus (strain SB)).